The chain runs to 237 residues: Ribonuclease PH (237 aa).

Phosphate-binding positions include Arg86 and 124–126 (GTR).

It belongs to the RNase PH family. In terms of assembly, homohexameric ring arranged as a trimer of dimers.

It carries out the reaction tRNA(n+1) + phosphate = tRNA(n) + a ribonucleoside 5'-diphosphate. Phosphorolytic 3'-5' exoribonuclease that plays an important role in tRNA 3'-end maturation. Removes nucleotide residues following the 3'-CCA terminus of tRNAs; can also add nucleotides to the ends of RNA molecules by using nucleoside diphosphates as substrates, but this may not be physiologically important. Probably plays a role in initiation of 16S rRNA degradation (leading to ribosome degradation) during starvation. The sequence is that of Ribonuclease PH from Roseobacter denitrificans (strain ATCC 33942 / OCh 114) (Erythrobacter sp. (strain OCh 114)).